The primary structure comprises 366 residues: RISC-loading complex subunit TARBP2 (366 aa).

Sufficient for interaction with PRKRA regions lie at residues 22-105, 152-234, and 287-366; these read MLAA…EPAL, SPQQ…DARD, and LGAL…AGSK. A DRBM 1 domain is found at 30 to 97; it reads TPISLLQEYG…AEVALKHLKG (68 aa). The disordered stretch occupies residues 135–158; sequence PSAVPTRSSPMEVQPPVSPQQSEC. Phosphoserine is present on Ser-152. DRBM domains follow at residues 159-227 and 293-361; these read NPVG…RVHT and ACCS…YLKI. The sufficient for interaction with DICER1 stretch occupies residues 228–366; that stretch reads VPLDARDGNE…QYLKIMAGSK (139 aa).

It belongs to the TARBP2 family. Self-associates. Component of the RISC loading complex (RLC), or micro-RNA (miRNA) loading complex (miRLC), which is composed of DICER1, AGO2 and TARBP2. Note that the trimeric RLC/miRLC is also referred to as RISC. Interacts with EIF2AK2/PKR and inhibits its protein kinase activity. Interacts with DHX9 and PRKRA. Interacts with DICER1, AGO2, MOV10, EIF6 and RPL7A (60S ribosome subunit); they form a large RNA-induced silencing complex (RISC). Interacts with IRF7; this interaction prevents IRF7 phosphorylation and activation.

Its subcellular location is the cytoplasm. It is found in the perinuclear region. It localises to the nucleus. In terms of biological role, required for formation of the RNA induced silencing complex (RISC). Component of the RISC loading complex (RLC), also known as the micro-RNA (miRNA) loading complex (miRLC), which is composed of DICER1, AGO2 and TARBP2. Within the RLC/miRLC, DICER1 and TARBP2 are required to process precursor miRNAs (pre-miRNAs) to mature miRNAs and then load them onto AGO2. AGO2 bound to the mature miRNA constitutes the minimal RISC and may subsequently dissociate from DICER1 and TARBP2. May also play a role in the production of short interfering RNAs (siRNAs) from double-stranded RNA (dsRNA) by DICER1. Binds in vitro to the PRM1 3'-UTR. Seems to act as a repressor of translation. For some pre-miRNA substrates, may also alter the choice of cleavage site by DICER1. Negatively regulates IRF7-mediated IFN-beta signaling triggered by viral infection by inhibiting the phosphorylation of IRF7 and promoting its 'Lys'-48-linked ubiquitination and degradation. The chain is RISC-loading complex subunit TARBP2 from Bos taurus (Bovine).